A 72-amino-acid chain; its full sequence is Toxin Acra II-1 (72 aa).

The LCN-type CS-alpha/beta domain maps to 3 to 67 (VPGNYPLNTY…VWNAAKNYCK (65 aa)). 3 disulfide bridges follow: Cys18–Cys41, Cys27–Cys46, and Cys31–Cys48.

The protein belongs to the long (3 C-C) scorpion toxin superfamily. Sodium channel inhibitor family. Beta subfamily. As to expression, expressed by the venom gland.

The protein resides in the secreted. Its function is as follows. Binds to sodium channels (Nav) and affects the channel activation process. The polypeptide is Toxin Acra II-1 (Androctonus crassicauda (Arabian fat-tailed scorpion)).